The chain runs to 113 residues: Gas vesicle protein I2 (113 aa).

The segment at 1 to 93 (MTPTNRHTHG…TVPEQPTHAT (93 aa)) is disordered. Residues 11–22 (QNAQHARRNAQQ) show a composition bias toward low complexity. Positions 52–63 (EQPTSDTTNPAA) are enriched in polar residues. The span at 69–81 (AQRTNAQNAARNA) shows a compositional bias: low complexity. Residues 82–93 (HSTVPEQPTHAT) are compositionally biased toward polar residues.

The protein belongs to the gas vesicle GvpI family. As to quaternary structure, gvpF to GvpM interact with each other in vitro, and may form multi-subunit complex(es). Interacts with GvpC and GvpO.

The protein resides in the gas vesicle. Its function is as follows. Proteins GvpF to GvpM might be involved in nucleating gas vesicle formation. A minor component of the gas vesicle. Gas vesicles are hollow, gas filled proteinaceous nanostructures found in several microbial planktonic microorganisms. They allow positioning of halobacteria at the optimal depth for growth in the poorly aerated, shallow brine pools of their habitat. Functionally, expression of 2 c-vac DNA fragments containing 2 divergently transcribed regions (gvpE-gvpF-gvpG-gvpH-gvpI-gvpJ-gvpK-gvpL-gvpM and gvpA-gvpC-gvpN-gvpO) allows H.volcanii to produce gas vesicles. The polypeptide is Gas vesicle protein I2 (Halobacterium salinarum (strain ATCC 700922 / JCM 11081 / NRC-1) (Halobacterium halobium)).